Reading from the N-terminus, the 284-residue chain is Protoheme IX farnesyltransferase (284 aa).

The next 9 membrane-spanning stretches (helical) occupy residues 2 to 19, 23 to 45, 69 to 89, 92 to 112, 121 to 141, 148 to 168, 194 to 214, 217 to 237, and 263 to 283; these read SLVV…PVTV, IALT…NMWS, GEAL…LGLA, LFAA…YSMW, IVIG…VATG, LFMF…LALF, VLVY…TGTG, LYLA…VRTW, and LFLH…GLGG.

Belongs to the UbiA prenyltransferase family. Protoheme IX farnesyltransferase subfamily. As to quaternary structure, interacts with CtaA.

Its subcellular location is the cell inner membrane. The enzyme catalyses heme b + (2E,6E)-farnesyl diphosphate + H2O = Fe(II)-heme o + diphosphate. Its pathway is porphyrin-containing compound metabolism; heme O biosynthesis; heme O from protoheme: step 1/1. Functionally, converts heme B (protoheme IX) to heme O by substitution of the vinyl group on carbon 2 of heme B porphyrin ring with a hydroxyethyl farnesyl side group. The sequence is that of Protoheme IX farnesyltransferase from Cereibacter sphaeroides (Rhodobacter sphaeroides).